A 465-amino-acid chain; its full sequence is Cyclin-A1 (465 aa).

This sequence belongs to the cyclin family. Cyclin AB subfamily. Interacts with the CDK2 and the CDC2 protein kinases to form a serine/threonine kinase holoenzyme complex. The cyclin subunit imparts substrate specificity to the complex. Does not bind CDK4 and CDK5 (in vitro). The cyclin A1-CDK2 complex interacts with transcription factor E2F-1 and RB proteins. Found in a complex with CDK2, CABLES1 and CCNE1. Interacts with INCA1. Interacts with KLHDC9. Polyubiquitinated via 'Lys-11'-linked ubiquitin by the anaphase-promoting complex (APC/C), leading to its degradation by the proteasome. Deubiquitinated and stabilized by USP37 enables entry into S phase. Ubiquitinated during the G1 phase by the SCF(FBXO31) complex, leading to its proteasomal degradation. In terms of tissue distribution, very high levels in testis and very low levels in brain. Also found in myeloid leukemia cell lines.

The protein resides in the nucleus. In terms of biological role, may be involved in the control of the cell cycle at the G1/S (start) and G2/M (mitosis) transitions. May primarily function in the control of the germline meiotic cell cycle and additionally in the control of mitotic cell cycle in some somatic cells. This chain is Cyclin-A1 (CCNA1), found in Homo sapiens (Human).